The chain runs to 74 residues: Exodeoxyribonuclease 7 small subunit (74 aa).

The protein belongs to the XseB family. As to quaternary structure, heterooligomer composed of large and small subunits.

It localises to the cytoplasm. The catalysed reaction is Exonucleolytic cleavage in either 5'- to 3'- or 3'- to 5'-direction to yield nucleoside 5'-phosphates.. In terms of biological role, bidirectionally degrades single-stranded DNA into large acid-insoluble oligonucleotides, which are then degraded further into small acid-soluble oligonucleotides. This is Exodeoxyribonuclease 7 small subunit from Glaesserella parasuis serovar 5 (strain SH0165) (Haemophilus parasuis).